Consider the following 219-residue polypeptide: Peptidyl-tRNA hydrolase (219 aa).

Residue Tyr-26 participates in tRNA binding. Catalysis depends on His-31, which acts as the Proton acceptor. Residues Tyr-78, Asn-80, and Asn-126 each contribute to the tRNA site.

This sequence belongs to the PTH family. As to quaternary structure, monomer.

The protein resides in the cytoplasm. The catalysed reaction is an N-acyl-L-alpha-aminoacyl-tRNA + H2O = an N-acyl-L-amino acid + a tRNA + H(+). Hydrolyzes ribosome-free peptidyl-tRNAs (with 1 or more amino acids incorporated), which drop off the ribosome during protein synthesis, or as a result of ribosome stalling. In terms of biological role, catalyzes the release of premature peptidyl moieties from peptidyl-tRNA molecules trapped in stalled 50S ribosomal subunits, and thus maintains levels of free tRNAs and 50S ribosomes. The protein is Peptidyl-tRNA hydrolase of Trichodesmium erythraeum (strain IMS101).